The following is a 724-amino-acid chain: Pre-mRNA-splicing factor CLF1 (724 aa).

HAT repeat units follow at residues 55–87 (EFQARKRTEFESRIRYSRDSILAWTKYAQWEAS), 89–121 (NEYERSRSVFERALDVDPRSVDLWIKYTDMELK), 123–155 (RNINHARNLFDRAITLLPRVDALWYKYVYLEEL), 157–188 (LNVSGARQIFERWMQWEPNDKAWQSYIKLEER), 190–221 (NELDRASAIYERWIACRPIPKNWVAWAKFEED), 223–262 (GQPDKAREVFQTALEFFGDEEEQVEKAQSVFAAFARMETR), 264–298 (KEFERARVIYKFALARLPRSKSASLYAQYTKFEKQ), 308–340 (TVLGKRRIQYEEELAYDPTNYDAWFSLARLEED), 352–386 (VEPMRVREVYERAVANVPPALEKRYWRRYIYLWLQ), 396–432 (KDYDRARDVYKAAVKLVPHKTFTFAKLWLAYAYFEIR), 434–465 (LDVSAARKVLGAGIGMCPKPKLFTGYIELEMR), 467–499 (REFDRVRTLYEKFLTYDPSLSSAWIQWTQVESA), 501–534 (EDFERVRAIFELAVQQSLDMPEIVWKAYIDFEAG), 536–567 (GERERARNLYERLLERTSHVKVWISYALMEIA), 585–626 (GDAD…EHGD), and 635–667 (DMLPTTRKRWRKAEDGSGELEEYWDLVFPDDEK). Positions 681–724 (QAWAQQRAGQGEEGGLSYDLPSDSESENEDEDGDNREEEGMDQD) are disordered. Residues 702–724 (SDSESENEDEDGDNREEEGMDQD) show a composition bias toward acidic residues.

The protein belongs to the crooked-neck family. As to quaternary structure, associated with the spliceosome.

It is found in the nucleus. Functionally, involved in pre-mRNA splicing and cell cycle progression. Required for the spliceosome assembly and initiation of the DNA replication. The polypeptide is Pre-mRNA-splicing factor CLF1 (CLF1) (Cryptococcus neoformans var. grubii serotype A (strain H99 / ATCC 208821 / CBS 10515 / FGSC 9487) (Filobasidiella neoformans var. grubii)).